We begin with the raw amino-acid sequence, 159 residues long: Ribosome maturation factor RimP (159 aa).

It belongs to the RimP family.

It localises to the cytoplasm. Required for maturation of 30S ribosomal subunits. The polypeptide is Ribosome maturation factor RimP (Geobacter metallireducens (strain ATCC 53774 / DSM 7210 / GS-15)).